Reading from the N-terminus, the 439-residue chain is tRNA modification GTPase MnmE (439 aa).

Residues arginine 20, glutamate 78, and lysine 116 each contribute to the (6S)-5-formyl-5,6,7,8-tetrahydrofolate site. The 154-residue stretch at 211–364 (GIYVTILGEP…LLNLIKQKVE (154 aa)) folds into the TrmE-type G domain. Residues 221–226 (NSGKST), 240–246 (SEYAGTT), and 265–268 (DTAG) contribute to the GTP site. Positions 225 and 246 each coordinate Mg(2+). Lysine 439 contributes to the (6S)-5-formyl-5,6,7,8-tetrahydrofolate binding site.

It belongs to the TRAFAC class TrmE-Era-EngA-EngB-Septin-like GTPase superfamily. TrmE GTPase family. Homodimer. Heterotetramer of two MnmE and two MnmG subunits. It depends on K(+) as a cofactor.

Its subcellular location is the cytoplasm. Exhibits a very high intrinsic GTPase hydrolysis rate. Involved in the addition of a carboxymethylaminomethyl (cmnm) group at the wobble position (U34) of certain tRNAs, forming tRNA-cmnm(5)s(2)U34. This chain is tRNA modification GTPase MnmE, found in Ehrlichia chaffeensis (strain ATCC CRL-10679 / Arkansas).